Consider the following 248-residue polypeptide: MGQKVNPVGLRLGINRTWDSRWFANKGDYGTLLHEDIKIRQMLLKQLKQAAVSKVVIERPHKKCRVTIYSARPGVVIGKKGADIDKLRKKVADMTKSEVFINIVEIRKPEIDARLVAESIAQQLERRVAFRRAMKRAVQSAMRLGAEGIRINCSGRLGGAEIARLEWYREGRVPLHTLRADVDYGTATAFTTYGTCGVKVWIFKGEILEHDPMAVDKRMTAESEGPSSGRPPRRDRDRDRDRDRDSAA.

The region spanning 39–107 (IRQMLLKQLK…EVFINIVEIR (69 aa)) is the KH type-2 domain. The disordered stretch occupies residues 214 to 248 (AVDKRMTAESEGPSSGRPPRRDRDRDRDRDRDSAA). The segment covering 232 to 248 (PRRDRDRDRDRDRDSAA) has biased composition (basic and acidic residues).

The protein belongs to the universal ribosomal protein uS3 family. As to quaternary structure, part of the 30S ribosomal subunit. Forms a tight complex with proteins S10 and S14.

Its function is as follows. Binds the lower part of the 30S subunit head. Binds mRNA in the 70S ribosome, positioning it for translation. The sequence is that of Small ribosomal subunit protein uS3 from Azorhizobium caulinodans (strain ATCC 43989 / DSM 5975 / JCM 20966 / LMG 6465 / NBRC 14845 / NCIMB 13405 / ORS 571).